Consider the following 362-residue polypeptide: Severin (362 aa).

A Gelsolin-like 1 repeat occupies 53–102 (FKVVPVPESSYGKFYDGDSYIILHTFKEGNSLKHDIHFFLGTFTTQDEAG). 162–170 (RLLHISGDK) is an a 1,2-diacyl-sn-glycero-3-phospho-(1D-myo-inositol-4,5-bisphosphate) binding site. Gelsolin-like repeat units lie at residues 172–212 (AKVA…QEKN) and 280–323 (LKFS…NEKK).

It belongs to the villin/gelsolin family.

Functionally, severin blocks the ends of F-actin and causes the fragmentation and depolymerization of actin filaments in a Ca(2+) dependent manner. In Dictyostelium discoideum (Social amoeba), this protein is Severin (sevA).